The primary structure comprises 149 residues: MARMHSRDRGKSGSTRPPRVAPPSWVEYSPEEVESLVVDLAKQGYEPAMIGIKLRDEYGIPDVKLITGKKITEILEEHGLAPELPEDLLNLIRRAKRVREHLKRHPKDLHSKRGLQLIESKIHRLVKYYKRKGVLPEDWKYDPEALHVE.

Positions 1–11 (MARMHSRDRGK) are enriched in basic and acidic residues. The tract at residues 1 to 25 (MARMHSRDRGKSGSTRPPRVAPPSW) is disordered.

Belongs to the universal ribosomal protein uS15 family. Part of the 30S ribosomal subunit.

The protein is Small ribosomal subunit protein uS15 of Methanopyrus kandleri (strain AV19 / DSM 6324 / JCM 9639 / NBRC 100938).